The chain runs to 28 residues: Cliotide T21 (28 aa).

Residues 1 to 28 constitute a cross-link (cyclopeptide (Asp-Asn)); it reads DLQCAETCVHSPCIGPCYCKHGLICYRN. 3 disulfide bridges follow: cysteine 4/cysteine 17, cysteine 8/cysteine 19, and cysteine 13/cysteine 25.

Contains 3 disulfide bonds. Post-translationally, this is a cyclic peptide. Expressed in root nodules but not in seed.

In terms of biological role, probably participates in a plant defense mechanism. Not active against Gram-negative bacterium E.coli ATCC 700926 or Gram-positive bacterium S.aureus ATCC 12600 up to a concentration of 100 uM under low-salt conditions. The chain is Cliotide T21 from Clitoria ternatea (Butterfly pea).